The sequence spans 260 residues: Global transcriptional regulator CodY (260 aa).

Residues 1–159 are GAF domain; sequence MPNLLQKTRK…SSTVVGIQLL (159 aa). A DNA-binding region (H-T-H motif) is located at residues 207-226; sequence ASVIADRIGITRSVIVNALR.

Belongs to the CodY family.

Its subcellular location is the cytoplasm. In terms of biological role, DNA-binding global transcriptional regulator which is involved in the adaptive response to starvation and acts by directly or indirectly controlling the expression of numerous genes in response to nutrient availability. During rapid exponential growth, CodY is highly active and represses genes whose products allow adaptation to nutrient depletion. The polypeptide is Global transcriptional regulator CodY (Streptococcus equi subsp. zooepidemicus (strain MGCS10565)).